Here is a 208-residue protein sequence, read N- to C-terminus: Small ribosomal subunit protein uS4 (208 aa).

The S4 RNA-binding domain maps to 98–161 (RRLDNVVYRL…KASPRIKELV (64 aa)).

The protein belongs to the universal ribosomal protein uS4 family. As to quaternary structure, part of the 30S ribosomal subunit. Contacts protein S5. The interaction surface between S4 and S5 is involved in control of translational fidelity.

Its function is as follows. One of the primary rRNA binding proteins, it binds directly to 16S rRNA where it nucleates assembly of the body of the 30S subunit. In terms of biological role, with S5 and S12 plays an important role in translational accuracy. In Desulforamulus reducens (strain ATCC BAA-1160 / DSM 100696 / MI-1) (Desulfotomaculum reducens), this protein is Small ribosomal subunit protein uS4.